We begin with the raw amino-acid sequence, 766 residues long: LPS-assembly protein LptD (766 aa).

A signal peptide spans 1 to 18; it reads MQIRYFLALSLLPNIVLA.

Belongs to the LptD family. As to quaternary structure, component of the lipopolysaccharide transport and assembly complex. Interacts with LptE and LptA.

The protein resides in the cell outer membrane. Its function is as follows. Together with LptE, is involved in the assembly of lipopolysaccharide (LPS) at the surface of the outer membrane. This Shewanella frigidimarina (strain NCIMB 400) protein is LPS-assembly protein LptD.